A 401-amino-acid chain; its full sequence is Deacetoxyvindoline 4-hydroxylase (401 aa).

One can recognise a Fe2OG dioxygenase domain in the interval 242–345 (CAEGLILLGH…SVAVAFGIKT (104 aa)). 3 residues coordinate Fe cation: His268, Asp270, and His324. Residue Arg334 coordinates 2-oxoglutarate.

The protein belongs to the iron/ascorbate-dependent oxidoreductase family. Monomer. Fe cation is required as a cofactor. Requires L-ascorbate as cofactor. As to expression, highest levels in leaves, lower levels in stems and fruits. Not expressed in flowers and roots.

Its subcellular location is the cytoplasm. The protein resides in the nucleus. It carries out the reaction deacetoxyvindoline + 2-oxoglutarate + O2 = 4-O-deacetylvindoline + succinate + CO2. The protein operates within alkaloid biosynthesis; vindoline biosynthesis. Its function is as follows. Catalyzes the C4-hydroxylation of desacetoxyvindoline. The protein is Deacetoxyvindoline 4-hydroxylase of Catharanthus roseus (Madagascar periwinkle).